A 750-amino-acid polypeptide reads, in one-letter code: Phosphate transporter PHO1 homolog 7 (750 aa).

The 298-residue stretch at 1 to 298 (MKFGKDFVRQ…SRSAAKPYME (298 aa)) folds into the SPX domain. Residues 1-350 (MKFGKDFVRQ…KVKKEKHRIT (350 aa)) are Cytoplasmic-facing. Residues 351–371 (FSTGFFVGCTVSLVVALVMFI) traverse the membrane as a helical segment. Over 372–391 (HARNIMGAVGHKVYMETMFP) the chain is Extracellular. The chain crosses the membrane as a helical span at residues 392-412 (LYSLFAFVVLHMIMYASNIYF). The Cytoplasmic segment spans residues 413 to 435 (WKRYRVNYPFIFGFKEGTELGYR). Residues 436–456 (HVLLLSFGLGTLALCAVLINL) traverse the membrane as a helical segment. The Extracellular segment spans residues 457–472 (DMEMDPNTNDYKTMTE). A helical transmembrane segment spans residues 473 to 493 (LLPMFILALVVAILFCPFNIF). The Cytoplasmic portion of the chain corresponds to 494-622 (YRSSRVFFLM…YSFNRGNIWK (129 aa)). In terms of domain architecture, EXS spans 557–750 (RSSDVYSTFY…NYNEEEDRDS (194 aa)). The chain crosses the membrane as a helical span at residues 623–643 (ISAWVFSALATFYGTYWDIVF). At 644–666 (DWGLLHRPSKHLLREKLLVPHKA) the chain is on the extracellular side. The helical transmembrane segment at 667–687 (VYYVAIVLNIVLRMAWLQTVL) threads the bilayer. The Cytoplasmic portion of the chain corresponds to 688 to 750 (DFNLSFLHRE…NYNEEEDRDS (63 aa)).

It belongs to the SYG1 (TC 2.A.94) family. As to expression, expressed in root tips, vascular cylinders of roots and filaments, leaf hydathodes, stem, receptacle and stigma apex.

Its subcellular location is the cell membrane. May transport inorganic phosphate (Pi). The sequence is that of Phosphate transporter PHO1 homolog 7 (PHO1-H7) from Arabidopsis thaliana (Mouse-ear cress).